A 520-amino-acid polypeptide reads, in one-letter code: Probable cytosol aminopeptidase (520 aa).

The Mn(2+) site is built by Lys-232 and Asp-237. Residue Lys-244 is part of the active site. 3 residues coordinate Mn(2+): Asp-255, Asp-314, and Glu-316. The active site involves Arg-318. Residues 488–520 (KAKKSTAKKATTKKTTTRKTASKTKSTKSKARK) are disordered.

This sequence belongs to the peptidase M17 family. It depends on Mn(2+) as a cofactor.

It is found in the cytoplasm. It carries out the reaction Release of an N-terminal amino acid, Xaa-|-Yaa-, in which Xaa is preferably Leu, but may be other amino acids including Pro although not Arg or Lys, and Yaa may be Pro. Amino acid amides and methyl esters are also readily hydrolyzed, but rates on arylamides are exceedingly low.. It catalyses the reaction Release of an N-terminal amino acid, preferentially leucine, but not glutamic or aspartic acids.. Presumably involved in the processing and regular turnover of intracellular proteins. Catalyzes the removal of unsubstituted N-terminal amino acids from various peptides. In Metamycoplasma salivarium (Mycoplasma salivarium), this protein is Probable cytosol aminopeptidase (pepA).